The primary structure comprises 841 residues: Envelope glycoprotein H (841 aa).

A signal peptide spans 1–17 (MFALVLAVVILPLWTTA). 3 N-linked (GlcNAc...) asparagine; by host glycosylation sites follow: N18, N45, and N217. At 18 to 802 (NKSYVTPTPA…ERRQAIRMSG (785 aa)) the chain is on the virion surface side. The interaction with gL stretch occupies residues 246–309 (DSGRVEVNIG…DPGPSYRVYL (64 aa)). 5 N-linked (GlcNAc...) asparagine; by host glycosylation sites follow: N317, N499, N522, N760, and N783. Residues 803 to 823 (QYLGASLGGAFLAVVGFGIIG) form a helical membrane-spanning segment. Residues 824-841 (WMLCGNSRLREYNKIPLT) are Intravirion-facing.

This sequence belongs to the herpesviridae glycoprotein H family. As to quaternary structure, interacts with glycoprotein L (gL); this interaction is necessary for the correct processing and cell surface expression of gH. The heterodimer gH/gL seems to interact with gB trimers during fusion. N-glycosylated, O-glycosylated, and sialylated.

The protein localises to the virion membrane. The protein resides in the host cell membrane. It is found in the host endosome membrane. Its function is as follows. The heterodimer glycoprotein H-glycoprotein L is required for the fusion of viral and plasma membranes leading to virus entry into the host cell. Following initial binding to host receptor, membrane fusion is mediated by the fusion machinery composed of gB and the heterodimer gH/gL. May also be involved in the fusion between the virion envelope and the outer nuclear membrane during virion morphogenesis. The polypeptide is Envelope glycoprotein H (Varicella-zoster virus (strain Dumas) (HHV-3)).